The following is a 707-amino-acid chain: Pheromone-processing carboxypeptidase KEX1 (707 aa).

An N-terminal signal peptide occupies residues Met-1 to Ala-17. Residues Ile-18 to Arg-564 are Lumenal-facing. Asn-64 and Asn-121 each carry an N-linked (GlcNAc...) asparagine glycan. Residue Ser-183 is part of the active site. Residues Asn-293 and Asn-378 are each glycosylated (N-linked (GlcNAc...) asparagine). The active site involves Asp-393. N-linked (GlcNAc...) asparagine glycans are attached at residues Asn-440 and Asn-448. The active site involves His-451. A disordered region spans residues Gly-496 to Ser-557. A compositionally biased stretch (basic and acidic residues) spans Glu-503–Asp-533. The span at Ser-536–Ser-549 shows a compositional bias: low complexity. The chain crosses the membrane as a helical span at residues Leu-565–Tyr-585. The Cytoplasmic segment spans residues Arg-586 to Ser-707. The tract at residues Asn-644–Ser-707 is disordered. Residues Ser-683–Glu-694 show a composition bias toward acidic residues. Over residues Thr-695–Ser-707 the composition is skewed to basic and acidic residues.

Belongs to the peptidase S10 family.

The protein resides in the golgi apparatus. It localises to the trans-Golgi network membrane. The enzyme catalyses Preferential release of a C-terminal arginine or lysine residue.. Functionally, protease with a carboxypeptidase B-like function involved in the C-terminal processing of the lysine and arginine residues from protein precursors. Promotes cell fusion and is involved in the programmed cell death. The chain is Pheromone-processing carboxypeptidase KEX1 (KEX1) from Candida tropicalis (strain ATCC MYA-3404 / T1) (Yeast).